The sequence spans 30 residues: Thrombin-like enzyme LmrSP-2 (30 aa).

The protein belongs to the peptidase S1 family. Snake venom subfamily. As to expression, expressed by the venom gland.

It localises to the secreted. Functionally, thrombin-like snake venom serine protease that cleaves alpha-chain of fibrinogen (FGA) releases only fibrinopeptide A. Shows coagulant, esterase and amidase activities. The sequence is that of Thrombin-like enzyme LmrSP-2 from Lachesis muta rhombeata (Bushmaster).